Reading from the N-terminus, the 435-residue chain is Tubulin-like protein TubZ (435 aa).

Residues 25-26 (MG), 124-126 (GTG), Asn185, and Asn209 contribute to the GTP site. The tract at residues 403-435 (QEEKPKKKKLNFGAEPEAEVADDSQPTKKKLSF) is disordered.

This sequence belongs to the FtsZ family. TubZ subfamily. Polymerizes to form two-stranded filaments and bundles at higher concentration in the presence of GTP. Binds to the TubR-tubC protein DNA complex.

The protein localises to the cytoplasm. The catalysed reaction is GTP + H2O = GDP + phosphate + H(+). Its activity is regulated as follows. GTPase inhibited by GTP-gamma-S, which also stabilizes filaments. A tubulin-like, filament forming GTPase; the motor component of the type III plasmid partition system which ensures correct segregation of the pXO1 plasmid. Essential for plasmid replication. The filaments seed from a DNA centromere-like site (tubC)-TubR complex which extends to surround the TubZ filaments. Highly dynamic filaments grow at the plus end and depolymerize at the minus end, a process called treadmilling. TubR-tubC complexes track the depolymerizing minus end of the filament, probably pulling plasmid within the cell. Has a high GTPase activity; in the presence of GTP assembles into dynamic filaments which bind almost exclusively GDP. Filament formation is cooperative, requiring a critical concentration. Formation occurs very quickly and is followed by disassembly as GTP is consumed. Small amounts of GTP-gamma-S stabilize filaments. Has high GTP and dGTPase activity, 6-fold lower ATPase activity. Forms filaments in the presence of ATP that also disassemble. Weakly binds DNA in a GTP-dependent, non-sequence-specific manner; GTP hydrolysis is not required for DNA-binding. The polypeptide is Tubulin-like protein TubZ (Bacillus anthracis).